The following is a 1892-amino-acid chain: Kinesin-like protein KIN-12E (1892 aa).

The tract at residues M1–N28 is disordered. A Kinesin motor domain is found at N64–I401. G145–T152 contributes to the ATP binding site. Coiled coils occupy residues K406–M438, S486–K526, L1066–Q1139, K1303–N1357, and I1396–I1528. Over residues L1633–S1649 the composition is skewed to basic and acidic residues. A disordered region spans residues L1633 to G1656. The stretch at M1780–E1841 forms a coiled coil. The interval H1870–Q1892 is disordered.

It belongs to the TRAFAC class myosin-kinesin ATPase superfamily. Kinesin family. KIN-12 subfamily.

The polypeptide is Kinesin-like protein KIN-12E (Oryza sativa subsp. japonica (Rice)).